A 209-amino-acid chain; its full sequence is Glycolipid transfer protein A (209 aa).

2 consecutive repeat copies span residues Ile45–Lys55 and Ile56–Lys66. The tract at residues Ile45–Lys66 is 2 X 12 AA approximate tandem repeats. Asp48–Lys55 is a beta-D-galactosyl-(1-&gt;4)-beta-D-glucosyl-(1&lt;-&gt;1)-N-[(9Z)-octadecenoyl]-sphing-4-enine binding site. His140 and Tyr207 together coordinate beta-D-galactosyl-(1-&gt;4)-beta-D-glucosyl-(1&lt;-&gt;1)-N-[(9Z)-octadecenoyl]-sphing-4-enine.

Belongs to the GLTP family.

It is found in the cytoplasm. Functionally, accelerates the intermembrane transfer of various glycolipids. Catalyzes the transfer of various glycosphingolipids between membranes but does not catalyze the transfer of phospholipids. May be involved in the intracellular translocation of glucosylceramides. In Xenopus laevis (African clawed frog), this protein is Glycolipid transfer protein A (gltp-a).